A 1043-amino-acid chain; its full sequence is RNA cytidine acetyltransferase (1043 aa).

Residues 285–294 (GRGKSAAVGL) and Arg-462 contribute to the ATP site. Residues 551-736 (VLMAPIDKSR…VPVYIRQNSN (186 aa)) form the N-acetyltransferase domain. Acetyl-CoA-binding positions include 622–624 (VAV), 629–635 (QSMGYGG), and Arg-723. Residues 1020 to 1043 (IPDAKDPANKNAKKKKRFSSGGRR) are disordered. Basic residues predominate over residues 1030 to 1043 (NAKKKKRFSSGGRR).

Belongs to the RNA cytidine acetyltransferase family. NAT10 subfamily. In terms of assembly, part of the small subunit (SSU) processome, composed of more than 70 proteins and the RNA chaperone small nucleolar RNA (snoRNA) U3.

It is found in the nucleus. The protein resides in the nucleolus. It carries out the reaction a cytidine in 18S rRNA + acetyl-CoA + ATP + H2O = an N(4)-acetylcytidine in 18S rRNA + ADP + phosphate + CoA + H(+). The catalysed reaction is a cytidine in tRNA + acetyl-CoA + ATP + H2O = an N(4)-acetylcytidine in tRNA + ADP + phosphate + CoA + H(+). Functionally, RNA cytidine acetyltransferase with specificity toward both 18S rRNA and tRNAs. Catalyzes the formation of N(4)-acetylcytidine (ac4C) in 18S rRNA. Required for early nucleolar cleavages of precursor rRNA at sites A0, A1 and A2 during 18S rRNA synthesis. Catalyzes the formation of ac4C in serine and leucine tRNAs. Requires a tRNA-binding adapter protein for full tRNA acetyltransferase activity but not for 18S rRNA acetylation. Part of the small subunit (SSU) processome, first precursor of the small eukaryotic ribosomal subunit. During the assembly of the SSU processome in the nucleolus, many ribosome biogenesis factors, an RNA chaperone and ribosomal proteins associate with the nascent pre-rRNA and work in concert to generate RNA folding, modifications, rearrangements and cleavage as well as targeted degradation of pre-ribosomal RNA by the RNA exosome. This chain is RNA cytidine acetyltransferase, found in Caenorhabditis elegans.